A 431-amino-acid polypeptide reads, in one-letter code: Glutamyl-tRNA(Gln) amidotransferase subunit A (431 aa).

Residues K55 and S130 each act as charge relay system in the active site. Residue S154 is the Acyl-ester intermediate of the active site.

This sequence belongs to the amidase family. GatA subfamily. Heterotrimer of A, B and C subunits.

It catalyses the reaction L-glutamyl-tRNA(Gln) + L-glutamine + ATP + H2O = L-glutaminyl-tRNA(Gln) + L-glutamate + ADP + phosphate + H(+). Functionally, allows the formation of correctly charged Gln-tRNA(Gln) through the transamidation of misacylated Glu-tRNA(Gln) in organisms which lack glutaminyl-tRNA synthetase. The reaction takes place in the presence of glutamine and ATP through an activated gamma-phospho-Glu-tRNA(Gln). The sequence is that of Glutamyl-tRNA(Gln) amidotransferase subunit A from Methanococcus maripaludis (strain C6 / ATCC BAA-1332).